A 262-amino-acid chain; its full sequence is Acyl-[acyl-carrier-protein]--UDP-N-acetylglucosamine O-acyltransferase (262 aa).

The protein belongs to the transferase hexapeptide repeat family. LpxA subfamily. Homotrimer.

The protein localises to the cytoplasm. The catalysed reaction is a (3R)-hydroxyacyl-[ACP] + UDP-N-acetyl-alpha-D-glucosamine = a UDP-3-O-[(3R)-3-hydroxyacyl]-N-acetyl-alpha-D-glucosamine + holo-[ACP]. It participates in glycolipid biosynthesis; lipid IV(A) biosynthesis; lipid IV(A) from (3R)-3-hydroxytetradecanoyl-[acyl-carrier-protein] and UDP-N-acetyl-alpha-D-glucosamine: step 1/6. Involved in the biosynthesis of lipid A, a phosphorylated glycolipid that anchors the lipopolysaccharide to the outer membrane of the cell. The polypeptide is Acyl-[acyl-carrier-protein]--UDP-N-acetylglucosamine O-acyltransferase (Burkholderia orbicola (strain MC0-3)).